The sequence spans 439 residues: Actin-related protein 3 (439 aa).

The interval 40–71 (PSAGTGGSGSGRPAVANKPSFLTGGAGPGGHL) is disordered.

It belongs to the actin family. ARP3 subfamily. As to quaternary structure, component of the Arp2/3 complex composed.

The protein resides in the cytoplasm. Its subcellular location is the cytoskeleton. Functions as ATP-binding component of the Arp2/3 complex which is involved in regulation of actin polymerization and together with an activating nucleation-promoting factor (NPF) mediates the formation of branched actin networks. Seems to contact the pointed end of the daughter actin filament. The polypeptide is Actin-related protein 3 (arp-3) (Neurospora crassa (strain ATCC 24698 / 74-OR23-1A / CBS 708.71 / DSM 1257 / FGSC 987)).